A 201-amino-acid chain; its full sequence is uncharacterized protein (201 aa).

2 coiled-coil regions span residues 3 to 43 (YMDD…EVYK) and 76 to 120 (TGQV…AKTK).

This is an uncharacterized protein from Archaeoglobus fulgidus (strain ATCC 49558 / DSM 4304 / JCM 9628 / NBRC 100126 / VC-16).